We begin with the raw amino-acid sequence, 293 residues long: Adenylyl-sulfate kinase 2, chloroplastic (293 aa).

The N-terminal 59 residues, M1 to S59, are a transit peptide targeting the chloroplast. ATP is bound at residue G122–T130. Substrate contacts are provided by residues D152, R155, R169, N172, I195 to S196, and G245. The Phosphoserine intermediate role is filled by S196.

Belongs to the APS kinase family. As to quaternary structure, interacts with APK1. In terms of tissue distribution, expressed in root vasculature, root tips, leaf epidermal cells and funiculus of developing seeds.

It localises to the plastid. Its subcellular location is the chloroplast. The enzyme catalyses adenosine 5'-phosphosulfate + ATP = 3'-phosphoadenylyl sulfate + ADP + H(+). It participates in sulfur metabolism; hydrogen sulfide biosynthesis; sulfite from sulfate: step 2/3. Its function is as follows. Catalyzes the synthesis of activated sulfate. Essential for plant reproduction and viability. Required for the production of glucosinolates. The sequence is that of Adenylyl-sulfate kinase 2, chloroplastic (APK2) from Arabidopsis thaliana (Mouse-ear cress).